Reading from the N-terminus, the 463-residue chain is MKKILVVGDLIADYYLWGKSERLSPEAPVPVLEVKKESKNLGGAANVANNLISLKAKVFLCGVVGDDLEGKHFISALKARNIDTSGILTDKTRCTTLKTRIIAQNQQIARVDKEIKDPLNADLRKNLLDFITEKIQEIDGVILSDYNKGVLDFELTQTIITLANKHHKLILCDPKGKDYSKYSHASLITPNRFELEHALHLKLDSHASLSKALQILKETYQIAMPLVTLSEQGIAFLEQGELVNCPTIAKEVYDVTGAGDTVIASLTLSLLESMSLKDACEFANAAAAVVVGKMGSALASLEEIALILNQTHPKILPLEKLLETLEHNQQKIVFTNGCFDLLHKGHASYLQKAKALGDILIVGLNSDASVKRLKGDKRPIVSEKDRAFLLASLSCVDYVVVFEEDTPIQLIQALKPDILVKGADYLNKEVIGSEFAKETRLMEFGEGYSTSAIIEKIKRTCND.

The interval 1-311 is ribokinase; that stretch reads MKKILVVGDL…EEIALILNQT (311 aa). Residue 191 to 194 coordinates ATP; it reads NRFE. The active site involves D260. Positions 334–463 are cytidylyltransferase; the sequence is FTNGCFDLLH…IEKIKRTCND (130 aa).

In the N-terminal section; belongs to the carbohydrate kinase PfkB family. The protein in the C-terminal section; belongs to the cytidylyltransferase family. In terms of assembly, homodimer.

It catalyses the reaction D-glycero-beta-D-manno-heptose 7-phosphate + ATP = D-glycero-beta-D-manno-heptose 1,7-bisphosphate + ADP + H(+). The enzyme catalyses D-glycero-beta-D-manno-heptose 1-phosphate + ATP + H(+) = ADP-D-glycero-beta-D-manno-heptose + diphosphate. Its pathway is nucleotide-sugar biosynthesis; ADP-L-glycero-beta-D-manno-heptose biosynthesis; ADP-L-glycero-beta-D-manno-heptose from D-glycero-beta-D-manno-heptose 7-phosphate: step 1/4. It functions in the pathway nucleotide-sugar biosynthesis; ADP-L-glycero-beta-D-manno-heptose biosynthesis; ADP-L-glycero-beta-D-manno-heptose from D-glycero-beta-D-manno-heptose 7-phosphate: step 3/4. Functionally, catalyzes the phosphorylation of D-glycero-D-manno-heptose 7-phosphate at the C-1 position to selectively form D-glycero-beta-D-manno-heptose-1,7-bisphosphate. Its function is as follows. Catalyzes the ADP transfer from ATP to D-glycero-beta-D-manno-heptose 1-phosphate, yielding ADP-D-glycero-beta-D-manno-heptose. This chain is Bifunctional protein HldE, found in Helicobacter pylori (strain G27).